The chain runs to 250 residues: Cell division protein FtsQ (250 aa).

Residues 1–11 (MWNNVRQLNLA) lie on the Cytoplasmic side of the membrane. A helical transmembrane segment spans residues 12-32 (ASALYALLLLVLAAAGCYWLI). At 33–250 (QRPAFALREI…FLTDTDKGKK (218 aa)) the chain is on the periplasmic side. A POTRA domain is found at 37 to 106 (FALREIRIDG…NALAVTLEEY (70 aa)).

This sequence belongs to the FtsQ/DivIB family. FtsQ subfamily. In terms of assembly, part of a complex composed of FtsB, FtsL and FtsQ.

The protein localises to the cell inner membrane. Functionally, essential cell division protein. May link together the upstream cell division proteins, which are predominantly cytoplasmic, with the downstream cell division proteins, which are predominantly periplasmic. May control correct divisome assembly. The sequence is that of Cell division protein FtsQ from Burkholderia pseudomallei (strain K96243).